Consider the following 372-residue polypeptide: Sesquiterpene synthase Agr9 (372 aa).

The Mg(2+) site is built by Asp-87, Asn-225, Ser-229, and Glu-233. Residues 87-91 (DEYTD) carry the DDXXD motif motif. The (2E,6E)-farnesyl diphosphate site is built by Arg-314 and Tyr-315.

This sequence belongs to the terpene synthase family. Requires Mg(2+) as cofactor.

It carries out the reaction (2E,6E)-farnesyl diphosphate = gamma-muurolene + diphosphate. The enzyme catalyses (2E,6E)-farnesyl diphosphate = delta-cadinene + diphosphate. Functionally, terpene cyclase that catalyzes the cyclization of farnesyl diphosphate (FPP) to various sesquiterpenes, including gamma-muurolene, beta-cadinene and delta-cadinene. The protein is Sesquiterpene synthase Agr9 of Cyclocybe aegerita (Black poplar mushroom).